Here is a 1050-residue protein sequence, read N- to C-terminus: MDKRKLGRRPSSSEIITEGKRKKSSSDLSEIRKMLNAKPEDVHVQSPLSKFRSSERWTLPLQWERSLRNKVISLDHKNKKHIRGCPVTSKSSPERQLKVMLTNVLWTDLGRKFRKTLPRNDANLCDANKVQSDSLPSTSVDSLETCQKLEPLRQSLNLSERIPRVILTNVLGTELGRKYIRTPPVTEGSLSDTDNLQSEQLSSSSDGSLESYQNLNPHKSCYLSERGSQRSKTVDDNSAKQTAHNKEKRRKDDGISLLISDTQPEDLNSGSRGCDHLEQESRNKDVKYSDSKVELTLISRKTKRRLRNNLPDSQYCTSLDKSTEQTKKQEDDSTISTEFEKPSENYHQDPKLPEEITTKPTKSDFTKLSSLNSQELTLSNATKSASAGSTTETVENSNSIDIVGISSLVEKDENELNTIEKPILRGHNEGNQSLISAEPIVVSSDEEGPVEHKSSEILKLQSKQDRETTNENESTSESALLELPLITCESVQMSSELCPYNPVMENISSIMPSNEMDLQLDFIFTSVYIGKIKGASKGCVTITKKYIKIPFQVSLNEISLLVDTTHLKRFGLWKSKDDNHSKRSHAILFFWVSSDYLQEIQTQLEHSVLSQQSKSSEFIFLELHNPVSQREELKLKDIMTEISIISGELELSYPLSWVQAFPLFQNLSSKESSFIHYYCVSTCSFPAGVAVAEEMKLKSVSQPSNTDAAKPTYTFLQKQSSGCYSLSITSNPDEEWREVRHTGLVQKLIVYPPPPTKGGLGVTNEDLECLEEGEFLNDVIIDFYLKYLILEKASDELVERSHIFSSFFYKCLTRKENNLTEDNPNLSMAQRRHKRVRTWTRHINIFNKDYIFVPVNESSHWYLAVICFPWLEEAVYEDFPQTVSQQSQAQQSQNDNKTIDNDLRTTSTLSLSAEDSQSTESNMSVPKKMCKRPCILILDSLKAASVQNTVQNLREYLEVEWEVKLKTHRQFSKTNMVDLCPKVPKQDNSSDCGVYLLQYVESFFKDPIVNFELPIHLEKWFPRHVIKTKREDIRELILKLHLQQQKGSSS.

Disordered regions lie at residues 1–28, 183–288, and 304–365; these read MDKR…SSDL, PPVT…DVKY, and RRLR…KSDF. 4 positions are modified to phosphoserine: S11, S12, S13, and S25. The segment covering 196-211 has biased composition (low complexity); sequence LQSEQLSSSSDGSLES. Over residues 259–271 the composition is skewed to polar residues; the sequence is ISDTQPEDLNSGS. Positions 273 to 288 are enriched in basic and acidic residues; it reads GCDHLEQESRNKDVKY. The span at 310 to 320 shows a compositional bias: polar residues; sequence LPDSQYCTSLD. Basic and acidic residues-rich tracts occupy residues 321 to 331 and 338 to 365; these read KSTEQTKKQED and EFEK…KSDF. Phosphoserine occurs at positions 373, 433, 443, and 444. The segment at 443-476 is disordered; sequence SSDEEGPVEHKSSEILKLQSKQDRETTNENESTS. Over residues 449-469 the composition is skewed to basic and acidic residues; the sequence is PVEHKSSEILKLQSKQDRETT. The protease stretch occupies residues 760–1050; the sequence is LGVTNEDLEC…HLQQQKGSSS (291 aa). Residues H860 and D939 contribute to the active site. Catalysis depends on C992, which acts as the Nucleophile.

Belongs to the peptidase C48 family.

Its subcellular location is the cytoplasm. Protease that acts as a positive regulator of the cGAS-STING pathway by catalyzing desumoylation of CGAS. Desumoylation of CGAS promotes DNA-binding activity of CGAS, subsequent oligomerization and activation. Deconjugates SUMO2 and SUMO3 from targeted proteins, but not SUMO1. Catalyzes the deconjugation of poly-SUMO2 and poly-SUMO3 chains. Has very low efficiency in processing full-length SUMO proteins to their mature forms. The polypeptide is Sentrin-specific protease 7 (Homo sapiens (Human)).